We begin with the raw amino-acid sequence, 134 residues long: MTKDQNGTWEMESNENFEGYMKALDIDFATRKIAVRLTQTKIITQDGDNFKTKTNSTFRNYDLDFTVGVEFDEHTKGLDGRHVKTLVTWEGNTLVCVQKGEKENRGWKQWVEGDKLYLELTCGDQVCRQVFKKK.

All-trans-retinol contacts are provided by Lys-41 and Gln-109.

It belongs to the calycin superfamily. Fatty-acid binding protein (FABP) family. In terms of tissue distribution, expressed in prenatal liver, intestine and lung, and in adult intestine.

It is found in the cytoplasm. Intracellular transport of retinol. The protein is Retinol-binding protein 2 (Rbp2) of Mus musculus (Mouse).